The primary structure comprises 496 residues: Versicolorin B desaturase stcL (496 aa).

The helical transmembrane segment at 3–23 (FLSLPILTALGAVVYVLFQLV) threads the bilayer. C440 lines the heme pocket.

It belongs to the cytochrome P450 family. It depends on heme as a cofactor.

It localises to the membrane. It catalyses the reaction versicolorin B + NADPH + O2 + H(+) = versicolorin A + NADP(+) + 2 H2O. It functions in the pathway mycotoxin biosynthesis; sterigmatocystin biosynthesis. Its function is as follows. Cytochrome P450 monooxygenase; part of the gene cluster that mediates the biosynthesis of sterigmatocystin (ST), a polyketide-derived furanocoumarin which is part of the most toxic and carcinogenic compounds among the known mycotoxins. The first step in the biosynthesis of sterigmatocystin is the production of hexanoate by the fatty acid synthase (FAS) units stcJ and stcK. The polyketide backbone is assembled by the non-reducing polyketide synthase stcA by condensation of the starter hexanoyl-CoA and 7 malonyl-CoA extender units followed by cyclization and release of norsolorinic acid. Norsolorinic acid is the first stable intermediate in the biosynthesis of sterigmatocystin and is converted into averantin (AVN) by the ketoreductase stcE which reduces the hexanoate ketone to an alcohol. Averantin is then oxidized into 5'-hydroxyaverantin (HAVN) by the cytochrome P450 monooxygenase stcF. 5'-hydroxyaverantin is further converted to 5'-oxyaverantin (OAVN) by the 5'-hydroxyaverantin dehydrogenase stcG. The next step is the conversion of OAVN into averufin (AVF) which is catalyzed by a yet to be identified enzyme. The cytochrome P450 monooxygenase stcB and the flavin-binding monooxygenase stcW are both required for the conversion of averufin to 1-hydroxyversicolorone. The esterase stcI probably catalyzes the formation of versiconal hemiacetal acetate from 1-hydroxyversicolorone. The oxydoreductase stcN then probably catalyzes the biosynthetic step from versiconal to versicolorin B (VERB). The next step is performed by the versicolorin B desaturase stcL to produce versicolorin A (VERA). The ketoreductase stcU and the cytochrome P450 monooxygenase stcS are involved in the conversion of versicolorin A to demethylsterigmatocystin. The Baeyer-Villiger oxidas stcQ and the reductase stcR might be involved in the biosynthetic step from versicolorin A to demethylsterigmatocystin. The final step in the biosynthesis of sterigmatocystin is the methylation of demethylsterigmatocystin catalyzed by the methyltransferase stcP. This chain is Versicolorin B desaturase stcL, found in Emericella nidulans (strain FGSC A4 / ATCC 38163 / CBS 112.46 / NRRL 194 / M139) (Aspergillus nidulans).